The sequence spans 760 residues: Exostosin-1 (760 aa).

Residues Met1–Arg6 are Cytoplasmic-facing. The chain crosses the membrane as a helical; Signal-anchor for type II membrane protein span at residues Tyr7–Tyr25. At Arg26–Ser760 the chain is on the lumenal side. N-linked (GlcNAc...) asparagine glycans are attached at residues Asn71 and Asn327. Residue Arg437 coordinates UDP-N-acetyl-alpha-D-glucosamine. An N-linked (GlcNAc...) asparagine glycan is attached at Asn476. The disordered stretch occupies residues Leu540–Pro560. A compositionally biased stretch (polar residues) spans Gly541–Pro560. Positions 565, 581, 582, 583, 669, 670, and 713 each coordinate UDP-N-acetyl-alpha-D-glucosamine. Asp583 contacts Mn(2+). Cys668 and Cys716 are disulfide-bonded. Residue Asp670 is part of the active site.

Belongs to the glycosyltransferase 47 family. As to quaternary structure, interacts with sau. Mn(2+) serves as cofactor. In terms of tissue distribution, ubiquitously expressed in early embryos. Later (in stage 10 embryos), it is expressed at higher level in the nervous system. Ubiquitously expressed in wing imaginal disk.

The protein resides in the endoplasmic reticulum membrane. The protein localises to the golgi apparatus membrane. The catalysed reaction is 3-O-{[(1-&gt;4)-beta-D-GlcA-(1-&gt;4)-alpha-D-GlcNAc](n)-(1-&gt;4)-beta-D-GlcA-(1-&gt;3)-beta-D-Gal-(1-&gt;3)-beta-D-Gal-(1-&gt;4)-beta-D-Xyl}-L-seryl-[protein] + UDP-N-acetyl-alpha-D-glucosamine = 3-O-{alpha-D-GlcNAc-[(1-&gt;4)-beta-D-GlcA-(1-&gt;4)-alpha-D-GlcNAc](n)-(1-&gt;4)-beta-D-GlcA-(1-&gt;3)-beta-D-Gal-(1-&gt;3)-beta-D-Gal-(1-&gt;4)-beta-D-Xyl}-L-seryl-[protein] + UDP + H(+). It catalyses the reaction 3-O-{alpha-D-GlcNAc-[(1-&gt;4)-beta-D-GlcA-(1-&gt;4)-alpha-D-GlcNAc](n)-(1-&gt;4)-beta-D-GlcA-(1-&gt;3)-beta-D-Gal-(1-&gt;3)-beta-D-Gal-(1-&gt;4)-beta-D-Xyl}-L-seryl-[protein] + UDP-alpha-D-glucuronate = 3-O-{[(1-&gt;4)-beta-D-GlcA-(1-&gt;4)-alpha-D-GlcNAc](n+1)-(1-&gt;4)-beta-D-GlcA-(1-&gt;3)-beta-D-Gal-(1-&gt;3)-beta-D-Gal-(1-&gt;4)-beta-D-Xyl}-L-seryl-[protein] + UDP + H(+). Its pathway is protein modification; protein glycosylation. The protein operates within glycan metabolism; heparan sulfate biosynthesis. It functions in the pathway glycan metabolism; heparin biosynthesis. In terms of biological role, glycosyltransferase required for the biosynthesis of heparan-sulfate and responsible for the alternating addition of beta-1-4-linked glucuronic acid (GlcA) and alpha-1-4-linked N-acetylglucosamine (GlcNAc) units to nascent heparan sulfate chains. Botv is the trigger of heparan sulfate chain initiation and polymerization takes place by a complex of ttv and sotv. Plays a central role in the diffusion of morphogens hedgehog (hh), wingless (wg) and decapentaplegic (dpp) via its role in heparan sulfate proteoglycans (HSPGs) biosynthesis which are required for movement of hh, dpp and wg morphogens. In Drosophila melanogaster (Fruit fly), this protein is Exostosin-1 (ttv).